Here is a 26-residue protein sequence, read N- to C-terminus: Photosystem II stability/assembly factor HCF136, chloroplastic (26 aa).

Belongs to the Ycf48 family.

The protein localises to the plastid. Its subcellular location is the chloroplast thylakoid lumen. In terms of biological role, essential for photosystem II (PSII) biogenesis; required for assembly of an early intermediate in PSII assembly that includes D2 (psbD) and cytochrome b559. The chain is Photosystem II stability/assembly factor HCF136, chloroplastic from Populus euphratica (Euphrates poplar).